The following is a 665-amino-acid chain: MESTTLSKPFKNQVNPWGPLIVLLILGRVNPVALGNSPHQVFNLSWEVTNEDRETVWAITGNHPLWTWWPDLTPDLCMLALHGPSYWGLEYQAPFSPPPGPPCCSGSSGSTPGCSRDCEEPLTSYTPRCNTAWNRLKLSKVTHAHNEGFYVCPGPHRPRWARSCGGPESFYCASWGCETTGRASWKPSSSWDYITVSNNLTSGQATPVCKNNTWCNSLTIRFTSLGKQATSWVTGHWWGLRLYVSGHDPGLIFGIRLKITDSGPRVPIGPNPVLSDQRPPSQPRSPPHSNSTPTETPLTLPEPPPAGVENRLLNLVKGAYQALNLTSPDRTQECWLCLVSGPPYYEGVAVLGTYSNHTSAPANCSVALQHKLTLSEVTGQGLCVGAVPKTHQALCNTTQNTSGGSYYLAAPAGTIWACNTGLTPCLSTTVLNLTTDYCVLVELWPRVTYHSPSYVYHQFERRGKYKREPVSLTLALLLGGLTMGGIAAGIGTGTTALVATQQLQAAVHDDLKEVEKSITNLEKSLTSLSEVVLQNRRGLDLLFLKEGGLCAALKEECCFYADHTGVVRDSMAKLRERLNQRQKLFESGQGWFERLFNGSPWFTTLISTIMGPLIVLLLILLLGPCILNRLVQFVKDRISVVQALVLTQQYHQLKSIDPEEMESRE.

The signal sequence occupies residues 1–31; that stretch reads MESTTLSKPFKNQVNPWGPLIVLLILGRVNP. A receptor-binding domain (RBD) region spans residues 32 to 267; that stretch reads VALGNSPHQV…KITDSGPRVP (236 aa). Residues 32-605 lie on the Extracellular side of the membrane; it reads VALGNSPHQV…FNGSPWFTTL (574 aa). A glycan (N-linked (GlcNAc...) asparagine; by host) is linked at Asn43. Cystine bridges form between Cys77–Cys129, Cys103–Cys118, Cys104–Cys114, Cys152–Cys172, and Cys164–Cys177. A Zn(2+)-binding site is contributed by Asp117. 2 N-linked (GlcNAc...) asparagine; by host glycosylation sites follow: Asn199 and Asn211. Cys209 and Cys215 are joined by a disulfide. The tract at residues 266–307 is disordered; sequence VPIGPNPVLSDQRPPSQPRSPPHSNSTPTETPLTLPEPPPAG. N-linked (GlcNAc...) asparagine; by host glycosylation is present at Asn324. 6 disulfide bridges follow: Cys334–Cys337, Cys334–Cys558, Cys364–Cys418, Cys383–Cys395, Cys425–Cys438, and Cys550–Cys557. The short motif at 334-337 is the CXXC element; that stretch reads CWLC. Residues Asn356 and Asn363 are each glycosylated (N-linked (GlcNAc...) asparagine; by host). Asn396, Asn400, and Asn432 each carry an N-linked (GlcNAc...) asparagine; by host glycan. Positions 470-490 are fusion peptide; sequence VSLTLALLLGGLTMGGIAAGI. Residues 505-532 adopt a coiled-coil conformation; sequence AAVHDDLKEVEKSITNLEKSLTSLSEVV. The segment at 533–549 is immunosuppression; the sequence is LQNRRGLDLLFLKEGGL. The CX6CC motif lies at 550 to 558; it reads CAALKEECC. A helical membrane pass occupies residues 606 to 626; that stretch reads ISTIMGPLIVLLLILLLGPCI. A lipid anchor (S-palmitoyl cysteine; by host) is attached at Cys625. Residues 627 to 665 lie on the Cytoplasmic side of the membrane; it reads LNRLVQFVKDRISVVQALVLTQQYHQLKSIDPEEMESRE. A YXXL motif; contains endocytosis signal motif is present at residues 650-653; sequence YHQL.

The mature envelope protein (Env) consists of a trimer of SU-TM heterodimers attached by a labile interchain disulfide bond. Specific enzymatic cleavages in vivo yield mature proteins. Envelope glycoproteins are synthesized as an inactive precursor that is N-glycosylated and processed likely by host cell furin or by a furin-like protease in the Golgi to yield the mature SU and TM proteins. The cleavage site between SU and TM requires the minimal sequence [KR]-X-[KR]-R. The R-peptide is released from the C-terminus of the cytoplasmic tail of the TM protein upon particle formation as a result of proteolytic cleavage by the viral protease. Cleavage of this peptide is required for TM to become fusogenic. In terms of processing, the CXXC motif is highly conserved across a broad range of retroviral envelope proteins. It is thought to participate in the formation of a labile disulfide bond possibly with the CX6CC motif present in the transmembrane protein. Isomerization of the intersubunit disulfide bond to an SU intrachain disulfide bond is thought to occur upon receptor recognition in order to allow membrane fusion. Post-translationally, the transmembrane protein is palmitoylated. The R-peptide is palmitoylated.

The protein resides in the virion membrane. The protein localises to the host cell membrane. Its function is as follows. The surface protein (SU) attaches the virus to the host cell by binding to its receptor. This interaction triggers the refolding of the transmembrane protein (TM) and is thought to activate its fusogenic potential by unmasking its fusion peptide. Fusion occurs at the host cell plasma membrane. In terms of biological role, the transmembrane protein (TM) acts as a class I viral fusion protein. Under the current model, the protein has at least 3 conformational states: pre-fusion native state, pre-hairpin intermediate state, and post-fusion hairpin state. During viral and target cell membrane fusion, the coiled coil regions (heptad repeats) assume a trimer-of-hairpins structure, positioning the fusion peptide in close proximity to the C-terminal region of the ectodomain. The formation of this structure appears to drive apposition and subsequent fusion of viral and target cell membranes. Membranes fusion leads to delivery of the nucleocapsid into the cytoplasm. The chain is Envelope glycoprotein (env) from Radiation murine leukemia virus.